A 169-amino-acid chain; its full sequence is S-ribosylhomocysteine lyase (169 aa).

3 residues coordinate Fe cation: H54, H58, and C128.

Belongs to the LuxS family. As to quaternary structure, homodimer. Requires Fe cation as cofactor.

It carries out the reaction S-(5-deoxy-D-ribos-5-yl)-L-homocysteine = (S)-4,5-dihydroxypentane-2,3-dione + L-homocysteine. Its function is as follows. Involved in the synthesis of autoinducer 2 (AI-2) which is secreted by bacteria and is used to communicate both the cell density and the metabolic potential of the environment. The regulation of gene expression in response to changes in cell density is called quorum sensing. Catalyzes the transformation of S-ribosylhomocysteine (RHC) to homocysteine (HC) and 4,5-dihydroxy-2,3-pentadione (DPD). The sequence is that of S-ribosylhomocysteine lyase from Psychromonas ingrahamii (strain DSM 17664 / CCUG 51855 / 37).